A 229-amino-acid chain; its full sequence is Orotidine 5'-phosphate decarboxylase (229 aa).

Residues aspartate 10, lysine 32, 59 to 68 (DLKFHDIPNT), threonine 119, arginine 180, glutamine 189, glycine 209, and arginine 210 contribute to the substrate site. Lysine 61 serves as the catalytic Proton donor.

This sequence belongs to the OMP decarboxylase family. Type 1 subfamily. As to quaternary structure, homodimer.

It carries out the reaction orotidine 5'-phosphate + H(+) = UMP + CO2. The protein operates within pyrimidine metabolism; UMP biosynthesis via de novo pathway; UMP from orotate: step 2/2. Functionally, catalyzes the decarboxylation of orotidine 5'-monophosphate (OMP) to uridine 5'-monophosphate (UMP). In Legionella pneumophila (strain Corby), this protein is Orotidine 5'-phosphate decarboxylase.